Consider the following 462-residue polypeptide: Fumarate hydratase class II (462 aa).

Residues 98 to 100, R126, 129 to 132, 139 to 141, and T187 each bind substrate; these read SGT, HPND, and SSN. The tract at residues 120–141 is disordered; sequence GTRGKGRKVHPNDHVNKGQSSN. H188 serves as the catalytic Proton donor/acceptor. Residue S318 is part of the active site. Substrate contacts are provided by residues S319 and 324–326; that span reads KVN.

This sequence belongs to the class-II fumarase/aspartase family. Fumarase subfamily. Homotetramer.

It is found in the cytoplasm. The catalysed reaction is (S)-malate = fumarate + H2O. The protein operates within carbohydrate metabolism; tricarboxylic acid cycle; (S)-malate from fumarate: step 1/1. Functionally, involved in the TCA cycle. Catalyzes the stereospecific interconversion of fumarate to L-malate. The protein is Fumarate hydratase class II of Nitrosomonas europaea (strain ATCC 19718 / CIP 103999 / KCTC 2705 / NBRC 14298).